The sequence spans 227 residues: Ribosomal RNA large subunit methyltransferase E (227 aa).

Residues Gly78, Trp80, Asp103, Asp119, and Asp143 each coordinate S-adenosyl-L-methionine. Catalysis depends on Lys183, which acts as the Proton acceptor.

This sequence belongs to the class I-like SAM-binding methyltransferase superfamily. RNA methyltransferase RlmE family.

It is found in the cytoplasm. The enzyme catalyses uridine(2552) in 23S rRNA + S-adenosyl-L-methionine = 2'-O-methyluridine(2552) in 23S rRNA + S-adenosyl-L-homocysteine + H(+). In terms of biological role, specifically methylates the uridine in position 2552 of 23S rRNA at the 2'-O position of the ribose in the fully assembled 50S ribosomal subunit. This is Ribosomal RNA large subunit methyltransferase E from Rickettsia typhi (strain ATCC VR-144 / Wilmington).